Reading from the N-terminus, the 402-residue chain is UDP-N-acetylmuramoylalanine--D-glutamate ligase (402 aa).

97–103 (GTNGKTT) contributes to the ATP binding site.

The protein belongs to the MurCDEF family.

It is found in the cytoplasm. It carries out the reaction UDP-N-acetyl-alpha-D-muramoyl-L-alanine + D-glutamate + ATP = UDP-N-acetyl-alpha-D-muramoyl-L-alanyl-D-glutamate + ADP + phosphate + H(+). It participates in cell wall biogenesis; peptidoglycan biosynthesis. Its function is as follows. Cell wall formation. Catalyzes the addition of glutamate to the nucleotide precursor UDP-N-acetylmuramoyl-L-alanine (UMA). This chain is UDP-N-acetylmuramoylalanine--D-glutamate ligase, found in Campylobacter jejuni (strain RM1221).